The primary structure comprises 553 residues: Putative transport protein YidE (553 aa).

Transmembrane regions (helical) follow at residues 4–24, 28–48, 65–85, 95–115, and 158–178; these read IALTVSILALVAVVGLFIGNV, GVGLGIGGVLFGGIIVGHFVS, FGLILFVYTIGIQVGPGFFAS, LFAVLIVIIGGLVTAILHKLF, and MSYAMAYPFGICGILFTMWML. RCK C-terminal domains are found at residues 191–276 and 279–361; these read QQHE…VIGQ and DTSL…VLGN. The next 6 membrane-spanning stretches (helical) occupy residues 371–391, 393–413, 439–459, 464–484, 493–513, and 533–553; these read MLPVFIGIGLGVLLGSIPVFV, GFPAALKLGLAGGPLIMALIL, IVLFLSVVGLKSGGDFIHTLV, LSWIGYGALITAVPLITVGIL, YLTMCGMLAGSMTDPPALAFA, and LVMFLRIITPQLLAVLFWSIG.

The protein belongs to the AAE transporter (TC 2.A.81) family. YidE subfamily.

Its subcellular location is the cell membrane. The chain is Putative transport protein YidE from Escherichia coli O6:K15:H31 (strain 536 / UPEC).